Consider the following 635-residue polypeptide: Probable monoacyl phosphatidylinositol tetramannoside-binding protein LpqW (635 aa).

An N-terminal signal peptide occupies residues 1–26 (MGVPSPVRRVCVTVGALVALACMVLA). Disordered stretches follow at residues 32–52 (PPPA…PRRP), 389–412 (NTSV…GPPE), and 511–551 (NAPT…LVKA). Composition is skewed to low complexity over residues 390–411 (TSVS…TGPP) and 511–531 (NAPT…APDT).

The protein belongs to the bacterial solute-binding protein 5 family.

The protein operates within phospholipid metabolism; phosphatidylinositol metabolism. May directly or indirectly regulate the accessibility of the key branch point intermediate, monoacyl phosphatidylinositol tetramannoside (AcPIM4), to the elongating alpha-1,6 mannosyltransferases which could regulate the lipoarabinomannans (LAMs) biosynthesis. This is Probable monoacyl phosphatidylinositol tetramannoside-binding protein LpqW (lpqW) from Mycobacterium tuberculosis (strain CDC 1551 / Oshkosh).